The following is an 835-amino-acid chain: U-box domain-containing protein 35 (835 aa).

3 disordered regions span residues 1-22 (MSRSPDKLALPPPPPPPPSRTV), 177-303 (VRPS…SSNR), and 410-457 (EKEK…LEGT). The segment covering 10 to 19 (LPPPPPPPPS) has biased composition (pro residues). Over residues 195–218 (RTNSSSGSSGPTSDSSDVMSSAHD) the composition is skewed to low complexity. The segment covering 269-282 (SSINRSSTDTTSRW) has biased composition (polar residues). 2 stretches are compositionally biased toward basic and acidic residues: residues 285 to 295 (RRRDYEERKEA) and 410 to 455 (EKEK…EKLE). Residues 340–459 (QSYTDNQVNL…EKEKLEGTLG (120 aa)) adopt a coiled-coil conformation. Positions 480–745 (FSEELKIGMG…DLKDQILPAL (266 aa)) constitute a Protein kinase domain. Residues 486-494 (IGMGAYGAV) and K507 contribute to the ATP site. D602 serves as the catalytic Proton acceptor. Residues 765–835 (QPPTHFICPL…TAIMEWRSTR (71 aa)) enclose the U-box domain.

This sequence belongs to the protein kinase superfamily. Ser/Thr protein kinase family.

The catalysed reaction is L-seryl-[protein] + ATP = O-phospho-L-seryl-[protein] + ADP + H(+). The enzyme catalyses L-threonyl-[protein] + ATP = O-phospho-L-threonyl-[protein] + ADP + H(+). It carries out the reaction S-ubiquitinyl-[E2 ubiquitin-conjugating enzyme]-L-cysteine + [acceptor protein]-L-lysine = [E2 ubiquitin-conjugating enzyme]-L-cysteine + N(6)-ubiquitinyl-[acceptor protein]-L-lysine.. It functions in the pathway protein modification; protein ubiquitination. Functions as an E3 ubiquitin ligase. This is U-box domain-containing protein 35 (PUB35) from Arabidopsis thaliana (Mouse-ear cress).